Here is a 365-residue protein sequence, read N- to C-terminus: Phospho-N-acetylmuramoyl-pentapeptide-transferase (365 aa).

The next 9 helical transmembrane spans lie at 47-67, 92-112, 114-134, 153-173, 180-200, 215-235, 239-259, 281-301, and 344-364; these read LLALGLGFSLAAIAGYWVVPL, PTMGGIFAIPAGLLPALILAG, SPLVWALAFVTLAYATIGWLD, LCLQFGAAFLFCLWLISQQGW, ITLPFGWSLALSLLFWPLAVF, LDGLAGGTGAAVLAGLGLWLA, PAIATFCCSLAGGFLGFLLHN, AIAIVANCLWVLLVMGGLFVL, and TQVVASFYGLTLLLIASCWLL.

Belongs to the glycosyltransferase 4 family. MraY subfamily. Mg(2+) serves as cofactor.

Its subcellular location is the cell inner membrane. The enzyme catalyses UDP-N-acetyl-alpha-D-muramoyl-L-alanyl-gamma-D-glutamyl-meso-2,6-diaminopimeloyl-D-alanyl-D-alanine + di-trans,octa-cis-undecaprenyl phosphate = di-trans,octa-cis-undecaprenyl diphospho-N-acetyl-alpha-D-muramoyl-L-alanyl-D-glutamyl-meso-2,6-diaminopimeloyl-D-alanyl-D-alanine + UMP. Its pathway is cell wall biogenesis; peptidoglycan biosynthesis. In terms of biological role, catalyzes the initial step of the lipid cycle reactions in the biosynthesis of the cell wall peptidoglycan: transfers peptidoglycan precursor phospho-MurNAc-pentapeptide from UDP-MurNAc-pentapeptide onto the lipid carrier undecaprenyl phosphate, yielding undecaprenyl-pyrophosphoryl-MurNAc-pentapeptide, known as lipid I. In Synechococcus elongatus (strain ATCC 33912 / PCC 7942 / FACHB-805) (Anacystis nidulans R2), this protein is Phospho-N-acetylmuramoyl-pentapeptide-transferase.